The chain runs to 154 residues: 6,7-dimethyl-8-ribityllumazine synthase (154 aa).

Residues Phe-22, 57-59 (AYE), and 81-83 (AVI) each bind 5-amino-6-(D-ribitylamino)uracil. 86–87 (GT) is a (2S)-2-hydroxy-3-oxobutyl phosphate binding site. Residue His-89 is the Proton donor of the active site. Phe-114 provides a ligand contact to 5-amino-6-(D-ribitylamino)uracil. (2S)-2-hydroxy-3-oxobutyl phosphate is bound at residue Arg-128.

It belongs to the DMRL synthase family. As to quaternary structure, forms an icosahedral capsid composed of 60 subunits, arranged as a dodecamer of pentamers.

The enzyme catalyses (2S)-2-hydroxy-3-oxobutyl phosphate + 5-amino-6-(D-ribitylamino)uracil = 6,7-dimethyl-8-(1-D-ribityl)lumazine + phosphate + 2 H2O + H(+). It functions in the pathway cofactor biosynthesis; riboflavin biosynthesis; riboflavin from 2-hydroxy-3-oxobutyl phosphate and 5-amino-6-(D-ribitylamino)uracil: step 1/2. Catalyzes the formation of 6,7-dimethyl-8-ribityllumazine by condensation of 5-amino-6-(D-ribitylamino)uracil with 3,4-dihydroxy-2-butanone 4-phosphate. This is the penultimate step in the biosynthesis of riboflavin. The polypeptide is 6,7-dimethyl-8-ribityllumazine synthase (Colwellia psychrerythraea (strain 34H / ATCC BAA-681) (Vibrio psychroerythus)).